A 258-amino-acid polypeptide reads, in one-letter code: uncharacterized protein (258 aa).

ATP is bound at residue 36 to 43 (GKAGTGKS).

The protein belongs to the IIV-6 075L family.

This is an uncharacterized protein from Acheta domesticus (House cricket).